The following is a 101-amino-acid chain: Large ribosomal subunit protein uL23 (101 aa).

This sequence belongs to the universal ribosomal protein uL23 family. Part of the 50S ribosomal subunit. Contacts protein L29, and trigger factor when it is bound to the ribosome.

Functionally, one of the early assembly proteins it binds 23S rRNA. One of the proteins that surrounds the polypeptide exit tunnel on the outside of the ribosome. Forms the main docking site for trigger factor binding to the ribosome. This is Large ribosomal subunit protein uL23 from Corynebacterium glutamicum (strain R).